The chain runs to 303 residues: Sushi domain-containing protein 6 (303 aa).

The N-terminal stretch at 1-39 is a signal peptide; it reads MCHGRIAPKSTSVFAVASVGHGVFLPLVILCTLLGDGLA. A Sushi domain is found at 40-104; the sequence is SVCPLPPEPE…KPAMEISCRL (65 aa). Topologically, residues 40-120 are extracellular; sequence SVCPLPPEPE…HTSLGVPTLS (81 aa). Disulfide bonds link Cys-42–Cys-89 and Cys-74–Cys-102. A helical membrane pass occupies residues 121-141; the sequence is IVASTASSVALILLLVVLFVL. The Cytoplasmic portion of the chain corresponds to 142-303; it reads LQPKLKSFHH…TDDIPLLKEA (162 aa). Disordered stretches follow at residues 199–237 and 263–282; these read VLSE…GQSG and GSGN…NSDI.

The protein resides in the membrane. In terms of biological role, may play a role in growth-suppressive activity and cell death. May be involved in the production of chemokine molecules in umbilical vein endothelial cells (HUVECs) cultured in THP1 monocyte LPS-induced medium. Plays a role in preventing tumor onset. The chain is Sushi domain-containing protein 6 from Homo sapiens (Human).